The chain runs to 359 residues: uncharacterized protein (359 aa).

Residues 1–17 form the signal peptide; sequence MLGRSLTSVLIVPTGIG. Residue Cys-18 is the site of N-palmitoyl cysteine attachment. The S-diacylglycerol cysteine moiety is linked to residue Cys-18.

The protein resides in the cell membrane. This is an uncharacterized protein from Synechococcus sp. (strain ATCC 27144 / PCC 6301 / SAUG 1402/1) (Anacystis nidulans).